A 166-amino-acid polypeptide reads, in one-letter code: NAD(P)H-quinone oxidoreductase subunit I, chloroplastic (166 aa).

4Fe-4S ferredoxin-type domains are found at residues 55–84 (GRIH…VDWK) and 95–124 (LNYS…MTEE). [4Fe-4S] cluster contacts are provided by Cys64, Cys67, Cys70, Cys74, Cys104, Cys107, Cys110, and Cys114.

It belongs to the complex I 23 kDa subunit family. As to quaternary structure, NDH is composed of at least 16 different subunits, 5 of which are encoded in the nucleus. [4Fe-4S] cluster serves as cofactor.

Its subcellular location is the plastid. It localises to the chloroplast thylakoid membrane. The catalysed reaction is a plastoquinone + NADH + (n+1) H(+)(in) = a plastoquinol + NAD(+) + n H(+)(out). It catalyses the reaction a plastoquinone + NADPH + (n+1) H(+)(in) = a plastoquinol + NADP(+) + n H(+)(out). Functionally, NDH shuttles electrons from NAD(P)H:plastoquinone, via FMN and iron-sulfur (Fe-S) centers, to quinones in the photosynthetic chain and possibly in a chloroplast respiratory chain. The immediate electron acceptor for the enzyme in this species is believed to be plastoquinone. Couples the redox reaction to proton translocation, and thus conserves the redox energy in a proton gradient. The protein is NAD(P)H-quinone oxidoreductase subunit I, chloroplastic of Lactuca sativa (Garden lettuce).